Here is a 236-residue protein sequence, read N- to C-terminus: uncharacterized protein (236 aa).

Residues 217–236 are disordered; sequence GESPDNVVRGEGGFGSTGGH. Residues 226–236 are compositionally biased toward gly residues; that stretch reads GEGGFGSTGGH.

This is an uncharacterized protein from Ostreid herpesvirus 1 (isolate France) (OsHV-1).